A 330-amino-acid chain; its full sequence is MSIEIRNINKQFGQFRALNEINLSIHSGELVALLGPSGCGKTTLLRIIAGLEQPDSGSIIFHGQDVSVHDVRKRNVGFVFQHYALFRHMTVFDNVAFGLRMKPKNIRPSKSDIEKKVHELLNLVQLDWLGDRYPEQLSGGQRQRIALARALIVEPSILLLDEPFGALDAKVRKELRRWLSQLHEDIDLTSVFVTHDQEEAMEVADRIVLMNKGVIEQIGTPAEVYNHPASEFVYHFLGDSNRLKVAQTEETILFRPHEVSLSVQAQDGYQAVTVRDIRPLGALTRLSLKLGEQSELIEAEVAKDDVSLEGLQKGDVIQFKPKRYNHDWEI.

The ABC transporter domain maps to 3–237; that stretch reads IEIRNINKQF…PASEFVYHFL (235 aa). Position 35-42 (35-42) interacts with ATP; that stretch reads GPSGCGKT.

It belongs to the ABC transporter superfamily. Sulfate/tungstate importer (TC 3.A.1.6) family. The complex is composed of two ATP-binding proteins (CysA), two transmembrane proteins (CysT and CysW) and a solute-binding protein (CysP).

It localises to the cell inner membrane. It catalyses the reaction sulfate(out) + ATP + H2O = sulfate(in) + ADP + phosphate + H(+). It carries out the reaction thiosulfate(out) + ATP + H2O = thiosulfate(in) + ADP + phosphate + H(+). Part of the ABC transporter complex CysAWTP involved in sulfate/thiosulfate import. Responsible for energy coupling to the transport system. This Pectobacterium atrosepticum (strain SCRI 1043 / ATCC BAA-672) (Erwinia carotovora subsp. atroseptica) protein is Sulfate/thiosulfate import ATP-binding protein CysA.